The chain runs to 176 residues: Urease accessory protein UreE (176 aa).

The interval 134–176 (FTPEGGAYGHGRTHAHEHGHTNHHGQHHDHADHGHSHDHSHDQ) is disordered. Residues 161–176 (HDHADHGHSHDHSHDQ) show a composition bias toward basic and acidic residues.

This sequence belongs to the UreE family.

It localises to the cytoplasm. Functionally, involved in urease metallocenter assembly. Binds nickel. Probably functions as a nickel donor during metallocenter assembly. This Ruegeria sp. (strain TM1040) (Silicibacter sp.) protein is Urease accessory protein UreE.